Consider the following 267-residue polypeptide: Fibroin light chain (267 aa).

The signal sequence occupies residues 1–16; sequence MLPFVLVLLVATSALA. Residue S19 is modified to N-acetylserine; in short form. C103 and C162 are joined by a disulfide.

As to quaternary structure, silk fibroin elementary unit consists in a disulfide-linked heavy and light chain and a p25 glycoprotein in molar ratios of 6:6:1. This results in a complex of approximately 2.3 MDa. In terms of processing, partially N-terminally processed to yield a short form which lacks the first two residues of the long form. Post-translationally, the interchain disulfide bridge is essential for the intracellular transport and secretion of fibroin. In terms of tissue distribution, produced exclusively in the posterior (PSG) section of silk glands, which are essentially modified salivary glands.

It localises to the secreted. Functionally, it is likely that the major role of L-chain is to prevent the retention of H-chain in ER by forming the disulfide linkage. The protein is Fibroin light chain (FIBL) of Galleria mellonella (Greater wax moth).